We begin with the raw amino-acid sequence, 359 residues long: E2F transcription factor-like E2FD (359 aa).

2 consecutive DNA-binding regions follow at residues 13-78 (RKDK…SWKG) and 138-217 (RKER…RWLG). Disordered stretches follow at residues 255–274 (RNKSGCSKEDSKRNGNQNTS) and 288–313 (DVKNFASGSSTPAGTSESNDMGNNIR). Residues 293–309 (ASGSSTPAGTSESNDMG) show a composition bias toward polar residues.

This sequence belongs to the E2F/DP family. As to quaternary structure, monomer. No interactions with DPA or E2FA. Preferentially expressed in proliferating tissues. Highly expressed in young stalk and young flowers. Lower expression in young leaves and mature flowers. Detected in cotyledonary vascular tissues, the shoot apical meristem, the base of trichomes, the fully developed stomata, the central root cylinder and in the columella of lateral roots but not in the primary root tips or in the leaf epidermal cells.

The protein resides in the nucleus. In terms of biological role, inhibitor of E2F-dependent regulation of gene expression. Binds specifically the E2 recognition site as a monomer without interacting with DP proteins. May be up-regulating E2FA and down-regulating repressors of cell cycle progression. Promotes cell proliferation and represses cell elongation. Regulated by proteolysis via a ubiquitin-proteasome pathway. This is E2F transcription factor-like E2FD (E2FD) from Arabidopsis thaliana (Mouse-ear cress).